Here is a 426-residue protein sequence, read N- to C-terminus: Pyrophosphate--fructose 6-phosphate 1-phosphotransferase 2 (426 aa).

Glycine 15 serves as a coordination point for diphosphate. Residue aspartate 114 coordinates Mg(2+). Substrate-binding positions include 140-142 (TID), 186-188 (MGR), glutamate 247, and 308-311 (YELR). The active-site Proton acceptor is aspartate 142.

It belongs to the phosphofructokinase type A (PFKA) family. PPi-dependent PFK group II subfamily. Clade 'Short' sub-subfamily. As to quaternary structure, homotetramer. Mg(2+) is required as a cofactor.

Its subcellular location is the cytoplasm. It catalyses the reaction beta-D-fructose 6-phosphate + diphosphate = beta-D-fructose 1,6-bisphosphate + phosphate + H(+). The protein operates within carbohydrate degradation; glycolysis; D-glyceraldehyde 3-phosphate and glycerone phosphate from D-glucose: step 3/4. Its activity is regulated as follows. Non-allosteric. Its function is as follows. Catalyzes the phosphorylation of D-fructose 6-phosphate, the first committing step of glycolysis. Uses inorganic phosphate (PPi) as phosphoryl donor instead of ATP like common ATP-dependent phosphofructokinases (ATP-PFKs), which renders the reaction reversible, and can thus function both in glycolysis and gluconeogenesis. Consistently, PPi-PFK can replace the enzymes of both the forward (ATP-PFK) and reverse (fructose-bisphosphatase (FBPase)) reactions. The polypeptide is Pyrophosphate--fructose 6-phosphate 1-phosphotransferase 2 (pfk2) (Trichomonas vaginalis (strain ATCC PRA-98 / G3)).